A 230-amino-acid polypeptide reads, in one-letter code: ATP phosphoribosyltransferase (230 aa).

The protein belongs to the ATP phosphoribosyltransferase family. Short subfamily. As to quaternary structure, heteromultimer composed of HisG and HisZ subunits.

It localises to the cytoplasm. The enzyme catalyses 1-(5-phospho-beta-D-ribosyl)-ATP + diphosphate = 5-phospho-alpha-D-ribose 1-diphosphate + ATP. It participates in amino-acid biosynthesis; L-histidine biosynthesis; L-histidine from 5-phospho-alpha-D-ribose 1-diphosphate: step 1/9. Functionally, catalyzes the condensation of ATP and 5-phosphoribose 1-diphosphate to form N'-(5'-phosphoribosyl)-ATP (PR-ATP). Has a crucial role in the pathway because the rate of histidine biosynthesis seems to be controlled primarily by regulation of HisG enzymatic activity. This is ATP phosphoribosyltransferase from Agrobacterium fabrum (strain C58 / ATCC 33970) (Agrobacterium tumefaciens (strain C58)).